The chain runs to 326 residues: 4-hydroxy-3-methylbut-2-enyl diphosphate reductase (326 aa).

Cys-22 is a [4Fe-4S] cluster binding site. The (2E)-4-hydroxy-3-methylbut-2-enyl diphosphate site is built by His-51 and His-84. Positions 51 and 84 each coordinate dimethylallyl diphosphate. Residues His-51 and His-84 each contribute to the isopentenyl diphosphate site. Cys-106 serves as a coordination point for [4Fe-4S] cluster. (2E)-4-hydroxy-3-methylbut-2-enyl diphosphate is bound at residue His-134. Position 134 (His-134) interacts with dimethylallyl diphosphate. Position 134 (His-134) interacts with isopentenyl diphosphate. The Proton donor role is filled by Glu-136. (2E)-4-hydroxy-3-methylbut-2-enyl diphosphate is bound at residue Thr-174. Residue Cys-204 participates in [4Fe-4S] cluster binding. Residues Ser-232, Ser-233, Asn-234, and Ser-276 each contribute to the (2E)-4-hydroxy-3-methylbut-2-enyl diphosphate site. Dimethylallyl diphosphate is bound by residues Ser-232, Ser-233, Asn-234, and Ser-276. Isopentenyl diphosphate is bound by residues Ser-232, Ser-233, Asn-234, and Ser-276.

Belongs to the IspH family. The cofactor is [4Fe-4S] cluster.

It catalyses the reaction isopentenyl diphosphate + 2 oxidized [2Fe-2S]-[ferredoxin] + H2O = (2E)-4-hydroxy-3-methylbut-2-enyl diphosphate + 2 reduced [2Fe-2S]-[ferredoxin] + 2 H(+). The catalysed reaction is dimethylallyl diphosphate + 2 oxidized [2Fe-2S]-[ferredoxin] + H2O = (2E)-4-hydroxy-3-methylbut-2-enyl diphosphate + 2 reduced [2Fe-2S]-[ferredoxin] + 2 H(+). Its pathway is isoprenoid biosynthesis; dimethylallyl diphosphate biosynthesis; dimethylallyl diphosphate from (2E)-4-hydroxy-3-methylbutenyl diphosphate: step 1/1. It participates in isoprenoid biosynthesis; isopentenyl diphosphate biosynthesis via DXP pathway; isopentenyl diphosphate from 1-deoxy-D-xylulose 5-phosphate: step 6/6. Catalyzes the conversion of 1-hydroxy-2-methyl-2-(E)-butenyl 4-diphosphate (HMBPP) into a mixture of isopentenyl diphosphate (IPP) and dimethylallyl diphosphate (DMAPP). Acts in the terminal step of the DOXP/MEP pathway for isoprenoid precursor biosynthesis. The sequence is that of 4-hydroxy-3-methylbut-2-enyl diphosphate reductase from Bordetella parapertussis (strain 12822 / ATCC BAA-587 / NCTC 13253).